Here is a 456-residue protein sequence, read N- to C-terminus: tRNA modification GTPase MnmE (456 aa).

3 residues coordinate (6S)-5-formyl-5,6,7,8-tetrahydrofolate: arginine 24, glutamate 81, and lysine 120. One can recognise a TrmE-type G domain in the interval glycine 216–glycine 379. K(+) is bound at residue asparagine 226. GTP is bound by residues asparagine 226–serine 231, threonine 245–threonine 251, aspartate 270–glycine 273, asparagine 335–aspartate 338, and serine 359–arginine 361. Serine 230 is a Mg(2+) binding site. K(+) is bound by residues threonine 245, isoleucine 247, and threonine 250. Threonine 251 contributes to the Mg(2+) binding site. Lysine 456 lines the (6S)-5-formyl-5,6,7,8-tetrahydrofolate pocket.

This sequence belongs to the TRAFAC class TrmE-Era-EngA-EngB-Septin-like GTPase superfamily. TrmE GTPase family. As to quaternary structure, homodimer. Heterotetramer of two MnmE and two MnmG subunits. The cofactor is K(+).

Its subcellular location is the cytoplasm. In terms of biological role, exhibits a very high intrinsic GTPase hydrolysis rate. Involved in the addition of a carboxymethylaminomethyl (cmnm) group at the wobble position (U34) of certain tRNAs, forming tRNA-cmnm(5)s(2)U34. The protein is tRNA modification GTPase MnmE of Pseudomonas syringae pv. syringae (strain B728a).